The sequence spans 139 residues: D-ribose pyranase (139 aa).

The Proton donor role is filled by H20. Substrate contacts are provided by residues D28, H106, and 128-130; that span reads YAN.

The protein belongs to the RbsD / FucU family. RbsD subfamily. Homodecamer.

The protein localises to the cytoplasm. It catalyses the reaction beta-D-ribopyranose = beta-D-ribofuranose. The protein operates within carbohydrate metabolism; D-ribose degradation; D-ribose 5-phosphate from beta-D-ribopyranose: step 1/2. In terms of biological role, catalyzes the interconversion of beta-pyran and beta-furan forms of D-ribose. The protein is D-ribose pyranase of Vibrio vulnificus (strain CMCP6).